A 153-amino-acid polypeptide reads, in one-letter code: Transcriptional regulator MraZ (153 aa).

2 consecutive SpoVT-AbrB domains span residues 7 to 61 (KEKH…LPDV) and 90 to 133 (LEMV…EPGR).

It belongs to the MraZ family. Forms oligomers.

The protein localises to the cytoplasm. The protein resides in the nucleoid. The polypeptide is Transcriptional regulator MraZ (Chlorobium luteolum (strain DSM 273 / BCRC 81028 / 2530) (Pelodictyon luteolum)).